A 335-amino-acid polypeptide reads, in one-letter code: 4-hydroxythreonine-4-phosphate dehydrogenase (335 aa).

T132 contributes to the substrate binding site. Residues H163, H208, and H263 each coordinate a divalent metal cation. Residues K271, N280, and R289 each coordinate substrate.

The protein belongs to the PdxA family. In terms of assembly, homodimer. Zn(2+) serves as cofactor. The cofactor is Mg(2+). Co(2+) is required as a cofactor.

The protein localises to the cytoplasm. It carries out the reaction 4-(phosphooxy)-L-threonine + NAD(+) = 3-amino-2-oxopropyl phosphate + CO2 + NADH. It functions in the pathway cofactor biosynthesis; pyridoxine 5'-phosphate biosynthesis; pyridoxine 5'-phosphate from D-erythrose 4-phosphate: step 4/5. Catalyzes the NAD(P)-dependent oxidation of 4-(phosphooxy)-L-threonine (HTP) into 2-amino-3-oxo-4-(phosphooxy)butyric acid which spontaneously decarboxylates to form 3-amino-2-oxopropyl phosphate (AHAP). In Zymomonas mobilis subsp. mobilis (strain ATCC 31821 / ZM4 / CP4), this protein is 4-hydroxythreonine-4-phosphate dehydrogenase.